We begin with the raw amino-acid sequence, 210 residues long: Dynein regulatory complex protein 12 (210 aa).

Residues 1-23 (MPPKNKEKGKKSGAQKKKKNWGA) are disordered. The span at 7 to 20 (EKGKKSGAQKKKKN) shows a compositional bias: basic residues. Residues 49–161 (RDEARRAKAS…EAKYEEILHD (113 aa)) are a coiled coil. Residues 188-210 (HKEQQRQFGLTPPGSLRPPAPSL) are disordered.

The protein belongs to the DRC12 family. As to quaternary structure, component of the nexin-dynein regulatory complex (N-DRC).

The protein resides in the cytoplasm. The protein localises to the cytoskeleton. It is found in the flagellum axoneme. In terms of biological role, component of the nexin-dynein regulatory complex (N-DRC), a key regulator of ciliary/flagellar motility which maintains the alignment and integrity of the distal axoneme and regulates microtubule sliding in motile axonemes. The polypeptide is Dynein regulatory complex protein 12 (Homo sapiens (Human)).